The sequence spans 358 residues: Phosphoserine aminotransferase (358 aa).

Residue Arg43 coordinates L-glutamate. The pyridoxal 5'-phosphate site is built by Trp103, Thr153, Asp172, and Gln195. Residue Lys196 is modified to N6-(pyridoxal phosphate)lysine. 236-237 lines the pyridoxal 5'-phosphate pocket; sequence NT.

This sequence belongs to the class-V pyridoxal-phosphate-dependent aminotransferase family. SerC subfamily. As to quaternary structure, homodimer. Pyridoxal 5'-phosphate serves as cofactor.

Its subcellular location is the cytoplasm. It catalyses the reaction O-phospho-L-serine + 2-oxoglutarate = 3-phosphooxypyruvate + L-glutamate. It carries out the reaction 4-(phosphooxy)-L-threonine + 2-oxoglutarate = (R)-3-hydroxy-2-oxo-4-phosphooxybutanoate + L-glutamate. Its pathway is amino-acid biosynthesis; L-serine biosynthesis; L-serine from 3-phospho-D-glycerate: step 2/3. The protein operates within cofactor biosynthesis; pyridoxine 5'-phosphate biosynthesis; pyridoxine 5'-phosphate from D-erythrose 4-phosphate: step 3/5. Functionally, catalyzes the reversible conversion of 3-phosphohydroxypyruvate to phosphoserine and of 3-hydroxy-2-oxo-4-phosphonooxybutanoate to phosphohydroxythreonine. The protein is Phosphoserine aminotransferase of Dichelobacter nodosus (strain VCS1703A).